Here is a 391-residue protein sequence, read N- to C-terminus: Galactokinase (391 aa).

Position 34–37 (34–37) interacts with substrate; it reads EHTD. 121 to 127 is a binding site for ATP; it reads GAGLSSS. 2 residues coordinate Mg(2+): serine 127 and glutamate 159. The active-site Proton acceptor is aspartate 171. Tyrosine 220 is a binding site for substrate.

The protein belongs to the GHMP kinase family. GalK subfamily.

It localises to the cytoplasm. It catalyses the reaction alpha-D-galactose + ATP = alpha-D-galactose 1-phosphate + ADP + H(+). The protein operates within carbohydrate metabolism; galactose metabolism. Functionally, catalyzes the transfer of the gamma-phosphate of ATP to D-galactose to form alpha-D-galactose-1-phosphate (Gal-1-P). This is Galactokinase from Roseiflexus sp. (strain RS-1).